The sequence spans 477 residues: Glycogen synthase (477 aa).

Lys15 is a binding site for ADP-alpha-D-glucose.

The protein belongs to the glycosyltransferase 1 family. Bacterial/plant glycogen synthase subfamily.

The catalysed reaction is [(1-&gt;4)-alpha-D-glucosyl](n) + ADP-alpha-D-glucose = [(1-&gt;4)-alpha-D-glucosyl](n+1) + ADP + H(+). The protein operates within glycan biosynthesis; glycogen biosynthesis. Synthesizes alpha-1,4-glucan chains using ADP-glucose. This chain is Glycogen synthase, found in Shigella boydii serotype 4 (strain Sb227).